The primary structure comprises 369 residues: 3-isopropylmalate dehydrogenase (369 aa).

Position 76–89 (76–89 (GPKWDRNPSHLRPE)) interacts with NAD(+). Arg96, Arg106, Arg134, and Asp223 together coordinate substrate. The Mg(2+) site is built by Asp223, Asp247, and Asp251. 281–293 (GSAPDIAGQNKAN) is a binding site for NAD(+).

The protein belongs to the isocitrate and isopropylmalate dehydrogenases family. LeuB type 1 subfamily. As to quaternary structure, homodimer. Mg(2+) is required as a cofactor. It depends on Mn(2+) as a cofactor.

It is found in the cytoplasm. It carries out the reaction (2R,3S)-3-isopropylmalate + NAD(+) = 4-methyl-2-oxopentanoate + CO2 + NADH. It functions in the pathway amino-acid biosynthesis; L-leucine biosynthesis; L-leucine from 3-methyl-2-oxobutanoate: step 3/4. In terms of biological role, catalyzes the oxidation of 3-carboxy-2-hydroxy-4-methylpentanoate (3-isopropylmalate) to 3-carboxy-4-methyl-2-oxopentanoate. The product decarboxylates to 4-methyl-2 oxopentanoate. In Priestia megaterium (strain DSM 319 / IMG 1521) (Bacillus megaterium), this protein is 3-isopropylmalate dehydrogenase (leuB).